Here is a 62-residue protein sequence, read N- to C-terminus: Photosystem II reaction center protein Z (62 aa).

Helical transmembrane passes span 8–28 (AVFALIATSSILLISVPVVFA) and 41–61 (FSGTSLWIGLVFLVGILNSLI).

It belongs to the PsbZ family. PSII is composed of 1 copy each of membrane proteins PsbA, PsbB, PsbC, PsbD, PsbE, PsbF, PsbH, PsbI, PsbJ, PsbK, PsbL, PsbM, PsbT, PsbY, PsbZ, Psb30/Ycf12, at least 3 peripheral proteins of the oxygen-evolving complex and a large number of cofactors. It forms dimeric complexes.

The protein resides in the plastid. It is found in the chloroplast thylakoid membrane. In terms of biological role, may control the interaction of photosystem II (PSII) cores with the light-harvesting antenna, regulates electron flow through the 2 photosystem reaction centers. PSII is a light-driven water plastoquinone oxidoreductase, using light energy to abstract electrons from H(2)O, generating a proton gradient subsequently used for ATP formation. This is Photosystem II reaction center protein Z from Nymphaea alba (White water-lily).